A 347-amino-acid polypeptide reads, in one-letter code: NADH-ubiquinone oxidoreductase chain 2 (347 aa).

Transmembrane regions (helical) follow at residues 3 to 23, 25 to 45, 60 to 80, 96 to 116, 122 to 142, 153 to 173, 178 to 198, 200 to 220, 237 to 257, 274 to 294, and 323 to 343; these read PPIL…VLTS, HWLL…PILM, FLTQ…NLMF, GLVT…FWVP, ISLS…LSIL, LLIT…LNQT, ILAY…TYNP, LMIL…MLFM, LPLM…LPPL, DMII…YFYM, and IILL…TPMM.

This sequence belongs to the complex I subunit 2 family. As to quaternary structure, core subunit of respiratory chain NADH dehydrogenase (Complex I) which is composed of 45 different subunits. Interacts with TMEM242.

It is found in the mitochondrion inner membrane. The catalysed reaction is a ubiquinone + NADH + 5 H(+)(in) = a ubiquinol + NAD(+) + 4 H(+)(out). Functionally, core subunit of the mitochondrial membrane respiratory chain NADH dehydrogenase (Complex I) which catalyzes electron transfer from NADH through the respiratory chain, using ubiquinone as an electron acceptor. Essential for the catalytic activity and assembly of complex I. The polypeptide is NADH-ubiquinone oxidoreductase chain 2 (Halichoerus grypus (Gray seal)).